A 288-amino-acid chain; its full sequence is MRFSYAEAMTDFTFYIPLAKAAEAAGYSSMTIPDSIAYPFESDSKYPYTPDGNREFMDGKPFIETFVLTAALGAVTTRLRFNFFVLKLPIRPPALVAKQAGSLAALIGNRVGLGVGTSPWPEDYELMGVPFAKRGKRIDECIEIVRGLTTGDYFEFHGEFYDIPKTKMTPAPTQPIPILVGGHADAALRRAARADGWMHGGGDPDELDRLIARVKRLREEAGKTSPFEIHVISLDGFTVDGVKRLEDKGVTDVIVGFRVPYTMGPDTEPLQTKIRNLEMFAENVIAKV.

This is an uncharacterized protein from Mycobacterium tuberculosis (strain CDC 1551 / Oshkosh).